Consider the following 679-residue polypeptide: Stress-70 protein, mitochondrial (679 aa).

The N-terminal 46 residues, 1–46 (MISATRAAAARLVGTAASRTPAAARHQDGWNGLSHEAFRFVSRRDY), are a transit peptide targeting the mitochondrion. The interval 1–432 (MISATRAAAA…IQGGVLAGDV (432 aa)) is interaction with NFS1. 2 residues coordinate ADP: Thr-63 and Asn-64. The segment at 63–431 (TNSCVAVMEG…AIQGGVLAGD (369 aa)) is nucleotide-binding domain (NBD). Lys-76 carries the N6-acetyllysine modification. The residue at position 87 (Thr-87) is a Phosphothreonine. Lys-135 and Lys-138 each carry N6-acetyllysine; alternate. N6-succinyllysine; alternate occurs at positions 135 and 138. At Lys-143 the chain carries N6-acetyllysine. Position 206 is an N6-acetyllysine; alternate (Lys-206). Position 206 is an N6-succinyllysine; alternate (Lys-206). Lys-206 is subject to N6-malonyllysine; alternate. An N6-acetyllysine mark is found at Lys-234 and Lys-288. Lys-300 carries the N6-acetyllysine; alternate modification. The residue at position 300 (Lys-300) is an N6-succinyllysine; alternate. ADP contacts are provided by Glu-313, Lys-316, and Ser-320. Lys-360 bears the N6-acetyllysine; alternate mark. The residue at position 360 (Lys-360) is an N6-succinyllysine; alternate. Lys-368 bears the N6-succinyllysine mark. Residues Gly-388 and Arg-391 each contribute to the ADP site. Position 394 is an N6-succinyllysine (Lys-394). Phosphoserine is present on Ser-408. Residues 432–441 (VTDVLLLDVT) form an interdomain linker region. The interaction with FXN and ISCU stretch occupies residues 432 to 679 (VTDVLLLDVT…QKEDQKEEKQ (248 aa)). A substrate-binding domain (SBD) region spans residues 442 to 679 (PLSLGIETLG…QKEDQKEEKQ (238 aa)). Omega-N-methylarginine is present on Arg-513. An N6-acetyllysine; alternate mark is found at Lys-567 and Lys-600. Residues Lys-567 and Lys-600 each carry the N6-succinyllysine; alternate modification. Lys-610 bears the N6-succinyllysine mark. Residue Lys-612 is modified to N6-acetyllysine. Lys-646 bears the N6-acetyllysine; alternate mark. An N6-succinyllysine; alternate modification is found at Lys-646. The interval 656–679 (ASEREGSGSSGTGEQKEDQKEEKQ) is disordered. The span at 669–679 (EQKEDQKEEKQ) shows a compositional bias: basic and acidic residues.

It belongs to the heat shock protein 70 family. In terms of assembly, interacts strongly with the intermediate form of FXN and weakly with its mature form. Interacts with HSCB. Associates with the mitochondrial contact site and cristae organizing system (MICOS) complex, composed of at least MICOS10/MIC10, CHCHD3/MIC19, CHCHD6/MIC25, APOOL/MIC27, IMMT/MIC60, APOO/MIC23/MIC26 and QIL1/MIC13. This complex was also known under the names MINOS or MitOS complex. The MICOS complex associates with mitochondrial outer membrane proteins SAMM50, MTX1, MTX2 and DNAJC11, mitochondrial inner membrane protein TMEM11 and with HSPA9. Interacts with DNLZ, the interaction is required to prevent self-aggregation. Interacts with TESPA1. Interacts with PDPN. Interacts with NFU1, NFS1 and ISCU. Interacts with TP53; the interaction promotes TP53 degradation. Interacts (via SBD domain) with UBXN2A; the interaction with UBXN2A inhibits HSPA9/MOT-2 interaction with and degradation of TP53, thereby promotes TP53 translocation to the nucleus. Interacts with ITPR1 AND VDAC1; this interaction couples ITPR1 to VDAC1. Component of the TIM23 mitochondrial inner membrane pre-sequence translocase complex.

It localises to the mitochondrion. The protein resides in the nucleus. The protein localises to the nucleolus. It is found in the cytoplasm. Its subcellular location is the mitochondrion matrix. It carries out the reaction ATP + H2O = ADP + phosphate + H(+). The chaperone activity is regulated by ATP-induced allosteric coupling of the nucleotide-binding (NBD) and substrate-binding (SBD) domains. ATP binding in the NBD leads to a conformational change in the NBD, which is transferred through the interdomain linker (IDL) to the substrate-binding domain (SBD). This elicits a reduced substrate affinity and a faster substrate exchange rate. Upon hydrolysis of ATP to ADP, the protein undergoes a conformational change that increases its affinity for substrate proteins. It cycles through repeated phases of ATP hydrolysis and nucleotide exchange, facilitating repeated cycles of substrate binding and release. Functions in collaboration with co-chaperones. Functions with the co-chaperone, DNLZ, to maintain solubility and regulate ATP hydrolysis. Nucleotide exchange factors, GRPEL1 and GRPEL2, accelerate nucleotide exchange. Functionally, mitochondrial chaperone that plays a key role in mitochondrial protein import, folding, and assembly. Plays an essential role in the protein quality control system, the correct folding of proteins, the re-folding of misfolded proteins, and the targeting of proteins for subsequent degradation. These processes are achieved through cycles of ATP binding, ATP hydrolysis, and ADP release, mediated by co-chaperones. In mitochondria, it associates with the TIM (translocase of the inner membrane) protein complex to assist in the import and folding of mitochondrial proteins. Plays an important role in mitochondrial iron-sulfur cluster (ISC) biogenesis, interacts with and stabilizes ISC cluster assembly proteins FXN, NFU1, NFS1 and ISCU. Regulates erythropoiesis via stabilization of ISC assembly. Regulates mitochondrial calcium-dependent apoptosis by coupling two calcium channels, ITPR1 and VDAC1, at the mitochondria-associated endoplasmic reticulum (ER) membrane to facilitate calcium transport from the ER lumen to the mitochondria intermembrane space, providing calcium for the downstream calcium channel MCU, which releases it into the mitochondrial matrix. Although primarily located in the mitochondria, it is also found in other cellular compartments. In the cytosol, it associates with proteins involved in signaling, apoptosis, or senescence. It may play a role in cell cycle regulation via its interaction with and promotion of degradation of TP53. May play a role in the control of cell proliferation and cellular aging. Protects against reactive oxygen species (ROS). Extracellular HSPA9 plays a cytoprotective role by preventing cell lysis following immune attack by the membrane attack complex by disrupting formation of the complex. The polypeptide is Stress-70 protein, mitochondrial (Cricetulus griseus (Chinese hamster)).